The sequence spans 501 residues: ATP synthase subunit alpha, chloroplastic (501 aa).

170-177 (GDRQTGKT) lines the ATP pocket.

It belongs to the ATPase alpha/beta chains family. As to quaternary structure, F-type ATPases have 2 components, CF(1) - the catalytic core - and CF(0) - the membrane proton channel. CF(1) has five subunits: alpha(3), beta(3), gamma(1), delta(1), epsilon(1). CF(0) has four main subunits: a, b, b' and c.

The protein localises to the plastid. The protein resides in the chloroplast thylakoid membrane. The catalysed reaction is ATP + H2O + 4 H(+)(in) = ADP + phosphate + 5 H(+)(out). In terms of biological role, produces ATP from ADP in the presence of a proton gradient across the membrane. The alpha chain is a regulatory subunit. The polypeptide is ATP synthase subunit alpha, chloroplastic (Pisum sativum (Garden pea)).